The chain runs to 360 residues: Spermidine/putrescine-binding periplasmic protein 1 (360 aa).

The first 16 residues, Met1–Thr16, serve as a signal peptide directing secretion.

Belongs to the bacterial solute-binding protein PotD/PotF family.

It is found in the periplasm. Functionally, required for the activity of the bacterial periplasmic transport system of putrescine and spermidine. Polyamine binding protein. This chain is Spermidine/putrescine-binding periplasmic protein 1 (potD-B), found in Haemophilus influenzae (strain ATCC 51907 / DSM 11121 / KW20 / Rd).